A 399-amino-acid polypeptide reads, in one-letter code: MDEFDRDLDNELEFSHKSTKGVKVHRTFESMRLKPELLKGIYAYGFEAPSAIQSRAIMQIISGRDTIAQAQSGTGKTATFSIGMLEVLDSKSKECQALVLSPTRELATQIQNVIKHLGDYMNIQTYACIGGKNVGTDIKRLQQGQQIVSGTPGRVLDVIKRRNLSTRHIKMLILDEADELFTKGFKEQIYEIYKHLPPGVQVVVVSATLTHEVLEMTGKFTTDPVKILVKREEVSLSGIKQYYIQCEKEDWKFDTLCDLYDNLTITQAVIFCNTKIKVNWLTDQMRKQNFTVVAMHGDMKQEERDAIMNDFRSGNSRVLISTDVWARGIDVQQISLVINYDLPLDKENYIHRIGRSGRFGRKGTAINLLTKSDTIELKALEKYYSTKIKEMPSNVNDVM.

Positions 26 to 54 (RTFESMRLKPELLKGIYAYGFEAPSAIQS) match the Q motif motif. Residues 57-227 (IMQIISGRDT…GKFTTDPVKI (171 aa)) enclose the Helicase ATP-binding domain. An ATP-binding site is contributed by 70-77 (AQSGTGKT). Residues 175 to 178 (DEAD) carry the DEAD box motif. The 162-residue stretch at 238-399 (GIKQYYIQCE…EMPSNVNDVM (162 aa)) folds into the Helicase C-terminal domain.

This sequence belongs to the DEAD box helicase family. DDX48/FAL1 subfamily.

Its subcellular location is the nucleus. The protein resides in the nucleolus. It carries out the reaction ATP + H2O = ADP + phosphate + H(+). Functionally, ATP-dependent RNA helicase involved in 40S ribosomal subunit biogenesis. Required for the processing and cleavage of 35S pre-rRNA at sites A0, A1, and A2, leading to mature 18S rRNA. This Lodderomyces elongisporus (strain ATCC 11503 / CBS 2605 / JCM 1781 / NBRC 1676 / NRRL YB-4239) (Yeast) protein is ATP-dependent RNA helicase FAL1 (FAL1).